The primary structure comprises 256 residues: MPVTLEVSNHVAYVTLNRPEAMNSLDPESTADLTEIWARVRTDPDIRVAVLTGAGEKSFCTGTDMKKSPPPTECMAATYLRDGQPILPHMKMWKPIIAAINGYAVGGGLEIALACDLRIASTNAKFGLTEVKVASLAGLNGTQALPRAIPQAVAMKMLLTGEMISAEEALRYGLVSDVVEPSALADLARSYAEKIASAAPLSVQATKQAAVLGKDMPLEHGILYSHLLWGVLRDTEDRKEGFKAFGERRAPAFRGA.

E110 (nucleophile) is an active-site residue. The Proton acceptor role is filled by E130.

The protein belongs to the enoyl-CoA hydratase/isomerase family. In terms of assembly, homotrimer.

It catalyses the reaction (2S)-[(R)-hydroxy(phenyl)methyl]succinyl-CoA = (E)-2-benzylidenesuccinyl-CoA + H2O. Its pathway is xenobiotic degradation; toluene degradation. Involved in an anaerobic toluene degradation pathway. Catalyzes the hydration of (E)-2-benzylidenesuccinyl-CoA to the corresponding alcohol intermediate, 2-(alpha-hydroxybenzyl)succinyl-CoA. Also accepts the N-acetylcysteamine (NAC) thioester of (E)-benzylidenesuccinate. The chain is (E)-benzylidenesuccinyl-CoA hydratase from Thauera aromatica.